We begin with the raw amino-acid sequence, 289 residues long: Oxaloacetate decarboxylase (289 aa).

Ser-47 contacts substrate. Mg(2+) is bound at residue Asp-85. The substrate site is built by Arg-156 and His-232.

It belongs to the isocitrate lyase/PEP mutase superfamily. Oxaloacetate decarboxylase family. In terms of assembly, homotetramer; dimer of dimers. Requires Mg(2+) as cofactor.

It carries out the reaction oxaloacetate + H(+) = pyruvate + CO2. Functionally, catalyzes the decarboxylation of oxaloacetate into pyruvate. Seems to play a role in maintaining cellular concentrations of bicarbonate and pyruvate. This chain is Oxaloacetate decarboxylase, found in Rhodopseudomonas palustris (strain HaA2).